The sequence spans 645 residues: Envelope glycoprotein (645 aa).

The signal sequence occupies residues 1–33 (MESPAFSKPLKDKINPWGPLIIMGILVRAGASV). The interval 32–237 (SVQRDSPHQV…QVLNVGPRVP (206 aa)) is receptor-binding domain (RBD). Residues 34 to 585 (QRDSPHQVFN…FNRSPWFTTL (552 aa)) lie on the Extracellular side of the membrane. N-linked (GlcNAc...) asparagine; by host glycans are attached at residues Asn43 and Asn58. Intrachain disulfides connect Cys113–Cys130 and Cys122–Cys135. Positions 259 to 286 (PRPPRPPPSGAASMVPGAPPPSQQPGTG) are disordered. A glycan (N-linked (GlcNAc...) asparagine; by host) is linked at Asn301. 6 disulfide bridges follow: Cys311-Cys314, Cys311-Cys538, Cys341-Cys395, Cys360-Cys372, Cys402-Cys415, and Cys530-Cys537. Residues 311–314 (CWLC) carry the CXXC motif. Asn333 and Asn340 each carry an N-linked (GlcNAc...) asparagine; by host glycan. Asn373 and Asn409 each carry an N-linked (GlcNAc...) asparagine; by host glycan. Residues 447–467 (VSLTLALLLGGLTMGGIAAGV) form a fusion peptide region. Residues 490–510 (DLGALEKSVSALEKSLTSLSE) are a coiled coil. An immunosuppression region spans residues 513–529 (LQNRRGLDLLFLKEGGL). Residues 530–538 (CAALKEECC) carry the CX6CC motif. The helical transmembrane segment at 586-606 (ISTIMGPLIVLLLILLFGPCI) threads the bilayer. Residue Cys605 is the site of S-palmitoyl cysteine; by host attachment. Residues 607–640 (LNRLVQFVKDRISVVQALVLTQQYHQLKSIDPEE) lie on the Cytoplasmic side of the membrane. Residues 630-633 (YHQL) carry the YXXL motif; contains endocytosis signal motif.

In terms of assembly, the mature envelope protein (Env) consists of a trimer of SU-TM heterodimers attached by a labile interchain disulfide bond. The activated Env consists of SU monomers and TM trimers. Post-translationally, specific enzymatic cleavages in vivo yield mature proteins. Envelope glycoproteins are synthesized as an inactive precursor that is N-glycosylated and processed likely by host cell furin or by a furin-like protease in the Golgi to yield the mature SU and TM proteins. The cleavage site between SU and TM requires the minimal sequence [KR]-X-[KR]-R. The R-peptide is released from the C-terminus of the cytoplasmic tail of the TM protein upon particle formation as a result of proteolytic cleavage by the viral protease. Cleavage of this peptide is required for TM to become fusogenic. In terms of processing, the CXXC motif is highly conserved across a broad range of retroviral envelope proteins. It is thought to participate in the formation of a labile disulfide bond possibly with the CX6CC motif present in the transmembrane protein. Isomerization of the intersubunit disulfide bond to an SU intrachain disulfide bond is thought to occur upon receptor recognition in order to allow membrane fusion. The transmembrane protein is palmitoylated. Post-translationally, the R-peptide is palmitoylated.

The protein resides in the virion membrane. It is found in the host cell membrane. Its function is as follows. The surface protein (SU) attaches the virus to the host cell by binding to its receptor. This interaction activates a thiol in a CXXC motif of the C-terminal domain, where the other Cys residue participates in the formation of the intersubunit disulfide. The activated thiol will attack the disulfide and cause its isomerization into a disulfide isomer within the motif. This leads to SU displacement and TM refolding, and is thought to activate its fusogenic potential by unmasking its fusion peptide. Fusion occurs at the host cell plasma membrane. In terms of biological role, the transmembrane protein (TM) acts as a class I viral fusion protein. Under the current model, the protein has at least 3 conformational states: pre-fusion native state, pre-hairpin intermediate state, and post-fusion hairpin state. During viral and target cell membrane fusion, the coiled coil regions (heptad repeats) assume a trimer-of-hairpins structure, positioning the fusion peptide in close proximity to the C-terminal region of the ectodomain. The formation of this structure appears to drive apposition and subsequent fusion of viral and target cell membranes. Membranes fusion leads to delivery of the nucleocapsid into the cytoplasm. This chain is Envelope glycoprotein (env), found in Xenotropic MuLV-related virus (isolate VP42) (XMRV).